Consider the following 590-residue polypeptide: Aspartate--tRNA ligase (590 aa).

Glutamate 180 provides a ligand contact to L-aspartate. The interval 204-207 (QLFK) is aspartate. Arginine 226 contacts L-aspartate. ATP is bound by residues 226-228 (RDE) and glutamine 235. Histidine 454 contributes to the L-aspartate binding site. Glutamate 488 lines the ATP pocket. Residue arginine 495 coordinates L-aspartate. 540-543 (GFDR) lines the ATP pocket.

Belongs to the class-II aminoacyl-tRNA synthetase family. Type 1 subfamily. As to quaternary structure, homodimer.

The protein resides in the cytoplasm. The enzyme catalyses tRNA(Asp) + L-aspartate + ATP = L-aspartyl-tRNA(Asp) + AMP + diphosphate. Functionally, catalyzes the attachment of L-aspartate to tRNA(Asp) in a two-step reaction: L-aspartate is first activated by ATP to form Asp-AMP and then transferred to the acceptor end of tRNA(Asp). This chain is Aspartate--tRNA ligase, found in Clostridium kluyveri (strain NBRC 12016).